We begin with the raw amino-acid sequence, 375 residues long: N5-carboxyaminoimidazole ribonucleotide synthase (375 aa).

Residues Arg108, Lys148, 153–159 (GYDGKGQ), 183–186 (EQYL), Glu191, His214, and 266–267 (NE) contribute to the ATP site. An ATP-grasp domain is found at 112 to 296 (KQTLLEANTQ…QFDTHILAIT (185 aa)).

It belongs to the PurK/PurT family. In terms of assembly, homodimer.

The catalysed reaction is 5-amino-1-(5-phospho-beta-D-ribosyl)imidazole + hydrogencarbonate + ATP = 5-carboxyamino-1-(5-phospho-D-ribosyl)imidazole + ADP + phosphate + 2 H(+). The protein operates within purine metabolism; IMP biosynthesis via de novo pathway; 5-amino-1-(5-phospho-D-ribosyl)imidazole-4-carboxylate from 5-amino-1-(5-phospho-D-ribosyl)imidazole (N5-CAIR route): step 1/2. Functionally, catalyzes the ATP-dependent conversion of 5-aminoimidazole ribonucleotide (AIR) and HCO(3)(-) to N5-carboxyaminoimidazole ribonucleotide (N5-CAIR). This Staphylococcus epidermidis (strain ATCC 35984 / DSM 28319 / BCRC 17069 / CCUG 31568 / BM 3577 / RP62A) protein is N5-carboxyaminoimidazole ribonucleotide synthase.